Here is a 185-residue protein sequence, read N- to C-terminus: Ribosome-recycling factor (185 aa).

Belongs to the RRF family.

The protein localises to the cytoplasm. Responsible for the release of ribosomes from messenger RNA at the termination of protein biosynthesis. May increase the efficiency of translation by recycling ribosomes from one round of translation to another. The protein is Ribosome-recycling factor of Mycobacteroides abscessus (strain ATCC 19977 / DSM 44196 / CCUG 20993 / CIP 104536 / JCM 13569 / NCTC 13031 / TMC 1543 / L948) (Mycobacterium abscessus).